A 237-amino-acid chain; its full sequence is Probable GTP-binding protein EngB (237 aa).

In terms of domain architecture, EngB-type G spans 23 to 209 (AVPEVAFAGR…QAVIAGWLNL (187 aa)). Residues 31 to 38 (GRSNAGKS), 58 to 62 (GRTQH), 82 to 85 (DLPG), 149 to 152 (TKAD), and 187 to 190 (LFSS) contribute to the GTP site. Mg(2+) is bound by residues Ser38 and Thr60. The interval 214–237 (KAEREPAAANSVPPAVPPASDPAA) is disordered. Residues 227-237 (PAVPPASDPAA) show a composition bias toward pro residues.

Belongs to the TRAFAC class TrmE-Era-EngA-EngB-Septin-like GTPase superfamily. EngB GTPase family. The cofactor is Mg(2+).

In terms of biological role, necessary for normal cell division and for the maintenance of normal septation. This chain is Probable GTP-binding protein EngB, found in Cupriavidus taiwanensis (strain DSM 17343 / BCRC 17206 / CCUG 44338 / CIP 107171 / LMG 19424 / R1) (Ralstonia taiwanensis (strain LMG 19424)).